The primary structure comprises 667 residues: Primary amine oxidase (667 aa).

The N-terminal stretch at 1–18 (KFALFSVLTLLSFHAVFS) is a signal peptide. An N-linked (GlcNAc...) asparagine glycan is attached at N149. C155 and C176 are oxidised to a cystine. Positions 216 to 246 (PTAENTEYQVSKQSPPFGPKQHSLTSHQPQG) are disordered. Positions 218 to 229 (AENTEYQVSKQS) are enriched in polar residues. Residue N252 is glycosylated (N-linked (GlcNAc...) asparagine). 316 to 327 (FFDSGEFGFGLS) provides a ligand contact to substrate. The active-site Proton acceptor is the D318. A disulfide bridge connects residues C337 and C363. Residue N382 is glycosylated (N-linked (GlcNAc...) asparagine). 402-407 (VGNYDN) contacts substrate. Residue Y405 is the Schiff-base intermediate with substrate; via topaquinone of the active site. Y405 is subject to 2',4',5'-topaquinone. Residues H460 and H462 each contribute to the Cu cation site. Residues D469, F470, and D471 each contribute to the Mn(2+) site. An N-linked (GlcNAc...) asparagine glycan is attached at N576. Residues D610 and I611 each coordinate Mn(2+). Residue H621 participates in Cu cation binding.

This sequence belongs to the copper/topaquinone oxidase family. In terms of assembly, homodimer. Cu cation is required as a cofactor. It depends on Zn(2+) as a cofactor. L-topaquinone serves as cofactor. Requires Mn(2+) as cofactor. Glycosylated; contains two carbohydrate chains per monomer. In terms of processing, topaquinone (TPQ) is generated by copper-dependent autoxidation of a specific tyrosyl residue.

The enzyme catalyses a primary methyl amine + O2 + H2O = an aldehyde + H2O2 + NH4(+). This Lens culinaris (Lentil) protein is Primary amine oxidase.